The sequence spans 425 residues: Serine hydroxymethyltransferase (425 aa).

(6S)-5,6,7,8-tetrahydrofolate contacts are provided by residues leucine 125 and 129 to 131 (GHL). Lysine 234 carries the post-translational modification N6-(pyridoxal phosphate)lysine.

The protein belongs to the SHMT family. As to quaternary structure, homodimer. Pyridoxal 5'-phosphate is required as a cofactor.

The protein resides in the cytoplasm. It carries out the reaction (6R)-5,10-methylene-5,6,7,8-tetrahydrofolate + glycine + H2O = (6S)-5,6,7,8-tetrahydrofolate + L-serine. Its pathway is one-carbon metabolism; tetrahydrofolate interconversion. The protein operates within amino-acid biosynthesis; glycine biosynthesis; glycine from L-serine: step 1/1. Its function is as follows. Catalyzes the reversible interconversion of serine and glycine with tetrahydrofolate (THF) serving as the one-carbon carrier. This reaction serves as the major source of one-carbon groups required for the biosynthesis of purines, thymidylate, methionine, and other important biomolecules. Also exhibits THF-independent aldolase activity toward beta-hydroxyamino acids, producing glycine and aldehydes, via a retro-aldol mechanism. This chain is Serine hydroxymethyltransferase, found in Marinomonas sp. (strain MWYL1).